The primary structure comprises 302 residues: Succinate--CoA ligase [ADP-forming] subunit alpha (302 aa).

Residues 17 to 20 (TGST), Lys43, and 96 to 98 (ITE) contribute to the CoA site. Substrate is bound at residue Tyr159. Residue His247 is the Tele-phosphohistidine intermediate of the active site.

The protein belongs to the succinate/malate CoA ligase alpha subunit family. Heterotetramer of two alpha and two beta subunits.

It carries out the reaction succinate + ATP + CoA = succinyl-CoA + ADP + phosphate. The enzyme catalyses GTP + succinate + CoA = succinyl-CoA + GDP + phosphate. It participates in carbohydrate metabolism; tricarboxylic acid cycle; succinate from succinyl-CoA (ligase route): step 1/1. Its function is as follows. Succinyl-CoA synthetase functions in the citric acid cycle (TCA), coupling the hydrolysis of succinyl-CoA to the synthesis of either ATP or GTP and thus represents the only step of substrate-level phosphorylation in the TCA. The alpha subunit of the enzyme binds the substrates coenzyme A and phosphate, while succinate binding and nucleotide specificity is provided by the beta subunit. The protein is Succinate--CoA ligase [ADP-forming] subunit alpha of Staphylococcus aureus (strain MSSA476).